A 130-amino-acid chain; its full sequence is UPF0102 protein SCO5602 (130 aa).

This sequence belongs to the UPF0102 family.

This chain is UPF0102 protein SCO5602, found in Streptomyces coelicolor (strain ATCC BAA-471 / A3(2) / M145).